We begin with the raw amino-acid sequence, 621 residues long: Probable serine/threonine-protein kinase WNK2 (621 aa).

One can recognise a Protein kinase domain in the interval 28–286 (GRYTEVLGKG…AQELLMDPFL (259 aa)). ATP contacts are provided by residues 108–111 (TEVF) and Lys158. Asp175 acts as the Proton acceptor in catalysis. 4 disordered regions span residues 438-490 (SVEN…SDSP), 501-520 (VEPH…NDTD), 527-553 (GTSV…SPQS), and 600-621 (HREE…SDKP).

Belongs to the protein kinase superfamily. Ser/Thr protein kinase family. WNK subfamily.

The catalysed reaction is L-seryl-[protein] + ATP = O-phospho-L-seryl-[protein] + ADP + H(+). The enzyme catalyses L-threonyl-[protein] + ATP = O-phospho-L-threonyl-[protein] + ADP + H(+). The protein is Probable serine/threonine-protein kinase WNK2 (WNK2) of Oryza sativa subsp. japonica (Rice).